The chain runs to 448 residues: Probable glycine dehydrogenase (decarboxylating) subunit 1 (448 aa).

Belongs to the GcvP family. N-terminal subunit subfamily. As to quaternary structure, the glycine cleavage system is composed of four proteins: P, T, L and H. In this organism, the P 'protein' is a heterodimer of two subunits.

It carries out the reaction N(6)-[(R)-lipoyl]-L-lysyl-[glycine-cleavage complex H protein] + glycine + H(+) = N(6)-[(R)-S(8)-aminomethyldihydrolipoyl]-L-lysyl-[glycine-cleavage complex H protein] + CO2. Functionally, the glycine cleavage system catalyzes the degradation of glycine. The P protein binds the alpha-amino group of glycine through its pyridoxal phosphate cofactor; CO(2) is released and the remaining methylamine moiety is then transferred to the lipoamide cofactor of the H protein. The polypeptide is Probable glycine dehydrogenase (decarboxylating) subunit 1 (Listeria monocytogenes serotype 4b (strain F2365)).